We begin with the raw amino-acid sequence, 371 residues long: MAPPNTKESQLPGEQPTALCKRCNEVQATLQIRSESVCQKCFLQYIKTKAVKRMETYKGKRSTKVPQKLLLPLSFGPSSSCLLHMLDGYLGIQHERMNRVSYELFVVHIDLYLDDADREASAARLQKYKDQYPRHSYSSYGLHEALQLEGIDWQSLGISDLPTQDTKASSFDLQKIVSSLSSATSRADIVSTLLNRLLVDVAKRNDCESILFGDTTTRLAEKTLTETAKGRGFSLPWQVSDGPSPYGIGFLYPLRDILKKEIMTFSTSFSPLPELVVHQAPPSHISASSKSTTIDDLMAQYFESVEENFPSIVANVAVEFAGFLSQRALMASMVGVEIKIQIHGHQEKTLIQILFYAMDAQDLSTDESARP.

Belongs to the CTU2/NCS2 family.

It is found in the cytoplasm. Its pathway is tRNA modification; 5-methoxycarbonylmethyl-2-thiouridine-tRNA biosynthesis. In terms of biological role, plays a central role in 2-thiolation of mcm(5)S(2)U at tRNA wobble positions of tRNA(Lys), tRNA(Glu) and tRNA(Gln). May act by forming a heterodimer with ncs6 that ligates sulfur from thiocarboxylated urm1 onto the uridine of tRNAs at wobble position. Prior mcm(5) tRNA modification by the elongator complex is required for 2-thiolation. May also be involved in protein urmylation. In Sclerotinia sclerotiorum (strain ATCC 18683 / 1980 / Ss-1) (White mold), this protein is Cytoplasmic tRNA 2-thiolation protein 2 (ncs2).